Here is a 564-residue protein sequence, read N- to C-terminus: DNA ligase (564 aa).

Position 234 (Glu234) interacts with ATP. The active-site N6-AMP-lysine intermediate is the Lys236. Arg241, Arg256, Glu288, and Phe323 together coordinate ATP. Glu288 contacts a divalent metal cation. Glu383 serves as a coordination point for a divalent metal cation. Positions 399 and 403 each coordinate ATP.

The protein belongs to the ATP-dependent DNA ligase family. A divalent metal cation serves as cofactor.

It carries out the reaction ATP + (deoxyribonucleotide)n-3'-hydroxyl + 5'-phospho-(deoxyribonucleotide)m = (deoxyribonucleotide)n+m + AMP + diphosphate.. Its function is as follows. DNA ligase that seals nicks in double-stranded DNA during DNA replication, DNA recombination and DNA repair. It is not essential for viral replication and recombination. This chain is DNA ligase (LIG), found in Vertebrata (FPV).